The sequence spans 85 residues: UPF0386 protein Meso_1721 (85 aa).

The protein belongs to the UPF0386 family.

In Chelativorans sp. (strain BNC1), this protein is UPF0386 protein Meso_1721.